A 619-amino-acid chain; its full sequence is BUD13 homolog (619 aa).

Residues 20–56 (ADAGVDRGSESGRKRRKKRPKPGGAGGKGMRIVDDDV) form a disordered region. Residue S28 is modified to Phosphoserine. K65 is covalently cross-linked (Glycyl lysine isopeptide (Lys-Gly) (interchain with G-Cter in SUMO2)). The tract at residues 106-429 (LGGHNEDLPS…AHMYSGAKTG (324 aa)) is disordered. Positions 109–128 (HNEDLPSNRHFRHDTPDSSP) are enriched in basic and acidic residues. A Phosphothreonine modification is found at T123. The residue at position 127 (S127) is a Phosphoserine. T135 is modified (phosphothreonine). At S139 the chain carries Phosphoserine. Over residues 139-160 (SPRKDRHDTPDPSPRRARHDTP) the composition is skewed to basic and acidic residues. T147 carries the post-translational modification Phosphothreonine. Phosphoserine is present on S151. T159 is modified (phosphothreonine). Phosphoserine is present on residues S163, S172, S175, S197, S201, S214, S222, S226, S235, S236, S240, S248, S258, S259, S271, and S281. Residues 246 to 264 (NNSPDTSRRTLGSSDTQQL) are compositionally biased toward polar residues. A compositionally biased stretch (basic and acidic residues) spans 289-306 (KAPERASSKTSPHWKESG). S325 is modified (phosphoserine). Residues 335-353 (HFGDKKQLDSKGDCQKATD) show a composition bias toward basic and acidic residues. 5 positions are modified to phosphoserine: S354, S357, S358, S391, and S407. Positions 404-415 (SDLSPPRRSQPP) are enriched in low complexity. Positions 433–520 (TDIQREQQEL…VEDAMKEMQK (88 aa)) form a coiled coil. Residue Y494 is modified to Phosphotyrosine. A disordered region spans residues 538–578 (QEREGDPMANFIKKNKAKENKNKKVRPRYSGPAPPPNRFNI). S567 is subject to Phosphoserine.

It belongs to the CWC26 family. Part of the activated spliceosome B/catalytic step 1 spliceosome, one of the forms of the spliceosome which has a well-formed active site but still cannot catalyze the branching reaction and is composed of at least 52 proteins, the U2, U5 and U6 snRNAs and the pre-mRNA. Component of the minor spliceosome, which splices U12-type introns.

It is found in the nucleus. Functionally, involved in pre-mRNA splicing as component of the activated spliceosome. As a component of the minor spliceosome, involved in the splicing of U12-type introns in pre-mRNAs. The chain is BUD13 homolog (BUD13) from Homo sapiens (Human).